The primary structure comprises 158 residues: NAD(P)H-quinone oxidoreductase subunit J, chloroplastic (158 aa).

The protein belongs to the complex I 30 kDa subunit family. NDH is composed of at least 16 different subunits, 5 of which are encoded in the nucleus.

It localises to the plastid. The protein localises to the chloroplast thylakoid membrane. The enzyme catalyses a plastoquinone + NADH + (n+1) H(+)(in) = a plastoquinol + NAD(+) + n H(+)(out). It carries out the reaction a plastoquinone + NADPH + (n+1) H(+)(in) = a plastoquinol + NADP(+) + n H(+)(out). In terms of biological role, NDH shuttles electrons from NAD(P)H:plastoquinone, via FMN and iron-sulfur (Fe-S) centers, to quinones in the photosynthetic chain and possibly in a chloroplast respiratory chain. The immediate electron acceptor for the enzyme in this species is believed to be plastoquinone. Couples the redox reaction to proton translocation, and thus conserves the redox energy in a proton gradient. The polypeptide is NAD(P)H-quinone oxidoreductase subunit J, chloroplastic (Lactuca sativa (Garden lettuce)).